Here is a 1375-residue protein sequence, read N- to C-terminus: Patatin-like phospholipase domain-containing protein 6 (1375 aa).

A disordered region spans residues 1 to 20 (MEAPLQTGMMGTSSHGLATN). Over 1 to 59 (MEAPLQTGMMGTSSHGLATNSSGAKVAERDGFQDVLAPGEGSAGRICGAQPVPFVPQVL) the chain is Lumenal. Positions 9 to 20 (MMGTSSHGLATN) are enriched in polar residues. Asn20 carries N-linked (GlcNAc...) asparagine glycosylation. Residues 60–80 (GVMIGAGVAVVVTAVLILLVV) traverse the membrane as a helical segment. The Cytoplasmic segment spans residues 81–1375 (RRLRVPKTPA…QEPPGSATDA (1295 aa)). Residue 195 to 322 (VLGHFEKPLF…VRVVQIIMVR (128 aa)) participates in a nucleoside 3',5'-cyclic phosphate binding. Disordered regions lie at residues 352 to 436 (FPSP…RSDF) and 449 to 472 (LQEE…PREQ). Ser354 carries the phosphoserine modification. Positions 359–376 (TRTSPVRGSKRMVSTSAT) are enriched in polar residues. Thr361 bears the Phosphothreonine mark. Residues Ser362 and Ser372 each carry the phosphoserine modification. Over residues 384–398 (GRPPDPTGAPLPGPT) the composition is skewed to pro residues. Residue Ser420 is modified to Phosphoserine. Phosphothreonine is present on Thr464. A nucleoside 3',5'-cyclic phosphate-binding positions include 511–633 (ELAK…VAAR) and 629–749 (TVAA…LSQK). One can recognise a PNPLA domain in the interval 981–1147 (LVLGGGGARG…INNLPADIAR (167 aa)). Residues 985–990 (GGGARG) carry the GXGXXG motif. Positions 1012–1016 (GTSIG) match the GXSXG motif. Ser1014 functions as the Nucleophile in the catalytic mechanism. The active-site Proton acceptor is the Asp1134. Residues 1134–1136 (DGG) carry the DGA/G motif. Residues 1306-1375 (SYVSDGCADG…QEPPGSATDA (70 aa)) are disordered. A compositionally biased stretch (acidic residues) spans 1313–1329 (ADGEESDCLTEYEEDAG).

This sequence belongs to the NTE family. Post-translationally, glycosylated. As to expression, expressed in brain, placenta, kidney, neuron and skeletal muscle. Expressed in the developing eye, pituitary and brain.

Its subcellular location is the endoplasmic reticulum membrane. It carries out the reaction a 1-acyl-sn-glycero-3-phosphocholine + H2O = sn-glycerol 3-phosphocholine + a fatty acid + H(+). It catalyses the reaction 1-(9Z-octadecenoyl)-sn-glycero-3-phosphocholine + H2O = sn-glycerol 3-phosphocholine + (9Z)-octadecenoate + H(+). The enzyme catalyses 1-hexadecanoylglycerol + H2O = glycerol + hexadecanoate + H(+). The catalysed reaction is 2-hexadecanoylglycerol + H2O = glycerol + hexadecanoate + H(+). It carries out the reaction 1-(9Z-octadecenoyl)-glycerol + H2O = glycerol + (9Z)-octadecenoate + H(+). It catalyses the reaction 2-(9Z-octadecenoyl)-glycerol + H2O = glycerol + (9Z)-octadecenoate + H(+). The enzyme catalyses 2-(5Z,8Z,11Z,14Z-eicosatetraenoyl)-glycerol + H2O = glycerol + (5Z,8Z,11Z,14Z)-eicosatetraenoate + H(+). The catalysed reaction is 1-hexadecanoyl-sn-glycero-3-phosphate + H2O = sn-glycerol 3-phosphate + hexadecanoate + H(+). It carries out the reaction 1-hexadecanoyl-sn-glycero-3-phosphocholine + H2O = sn-glycerol 3-phosphocholine + hexadecanoate + H(+). Its activity is regulated as follows. Inhibited by a series a OPs such as mipafox (MPX), phenyl saligenin phosphate (PSP), phenyl dipentyl phosphinate (PDPP), diisopropyl fluorophosphate and paraoxon. Functionally, phospholipase B that deacylates intracellular phosphatidylcholine (PtdCho), generating glycerophosphocholine (GroPtdCho). This deacylation occurs at both sn-2 and sn-1 positions of PtdCho. Catalyzes the hydrolysis of several naturally occurring membrane-associated lipids. Hydrolyzes lysophospholipids and monoacylglycerols, preferring the 1-acyl to the 2-acyl isomer. Does not catalyze hydrolysis of di- or triacylglycerols or fatty acid amides. The sequence is that of Patatin-like phospholipase domain-containing protein 6 from Homo sapiens (Human).